A 165-amino-acid polypeptide reads, in one-letter code: MRTLAIYPGTFDPVTNGHLDIIKRSMEIFDNVIVAVAQSSSKRPMFSLQERIDILKLSTQNLVNVQVEGFCTLLADFAKQKGARMIIRGLRAVSDFEYELQIGYANASLNPELETIYFMPTLENAFISSSVVRSIIEHNGAFSHLVPKNAADFIYSLYTKHKRGM.

Substrate is bound at residue Thr10. ATP contacts are provided by residues 10 to 11 and His18; that span reads TF. Substrate is bound by residues Lys42, Leu74, and Arg88. Residues 89–91, Glu99, and 124–130 each bind ATP; these read GLR and NAFISSS.

Belongs to the bacterial CoaD family. As to quaternary structure, homohexamer. Requires Mg(2+) as cofactor.

The protein localises to the cytoplasm. The catalysed reaction is (R)-4'-phosphopantetheine + ATP + H(+) = 3'-dephospho-CoA + diphosphate. Its pathway is cofactor biosynthesis; coenzyme A biosynthesis; CoA from (R)-pantothenate: step 4/5. Reversibly transfers an adenylyl group from ATP to 4'-phosphopantetheine, yielding dephospho-CoA (dPCoA) and pyrophosphate. The sequence is that of Phosphopantetheine adenylyltransferase from Helicobacter hepaticus (strain ATCC 51449 / 3B1).